Reading from the N-terminus, the 201-residue chain is Ubiquitin-conjugating enzyme E2 E2 (201 aa).

Over residues 1–10 the composition is skewed to basic and acidic residues; that stretch reads MSTEAQRVDD. Positions 1 to 55 are disordered; that stretch reads MSTEAQRVDDSPSTSGGSSDGDQRESVQQEPDREQVQPKKKEGKISSKTAAKLST. Position 2 is an N-acetylserine (Ser-2). A phosphoserine mark is found at Ser-11, Ser-15, Ser-18, and Ser-19. A compositionally biased stretch (basic and acidic residues) spans 21–45; it reads GDQRESVQQEPDREQVQPKKKEGKI. A compositionally biased stretch (low complexity) spans 46–55; it reads SSKTAAKLST. The UBC core domain maps to 55 to 201; sequence TSAKRIQKEL…ARQWTKRYAT (147 aa). The Glycyl thioester intermediate role is filled by Cys-139.

The protein belongs to the ubiquitin-conjugating enzyme family. Post-translationally, autoubiquitinated.

It carries out the reaction S-ubiquitinyl-[E1 ubiquitin-activating enzyme]-L-cysteine + [E2 ubiquitin-conjugating enzyme]-L-cysteine = [E1 ubiquitin-activating enzyme]-L-cysteine + S-ubiquitinyl-[E2 ubiquitin-conjugating enzyme]-L-cysteine.. It functions in the pathway protein modification; protein ubiquitination. Accepts ubiquitin from the E1 complex and catalyzes its covalent attachment to other proteins. In vitro catalyzes 'Lys-11'- and 'Lys-48'-, as well as 'Lys-63'-linked polyubiquitination. Catalyzes the ISGylation of influenza A virus NS1 protein. The sequence is that of Ubiquitin-conjugating enzyme E2 E2 (Ube2e2) from Mus musculus (Mouse).